We begin with the raw amino-acid sequence, 457 residues long: L-asparaginase-like protein GL17509 (457 aa).

A signal peptide spans 1 to 20; sequence MRYLCRAQLLSLLLLPLLKA. Intrachain disulfides connect C72/C78, C172/C188, and C327/C354.

Belongs to the Ntn-hydrolase family.

This chain is L-asparaginase-like protein GL17509, found in Drosophila persimilis (Fruit fly).